A 169-amino-acid polypeptide reads, in one-letter code: Ureidoglycolate lyase (169 aa).

It belongs to the ureidoglycolate lyase family. As to quaternary structure, homodimer. Ni(2+) serves as cofactor.

It catalyses the reaction (S)-ureidoglycolate = urea + glyoxylate. Its pathway is nitrogen metabolism; (S)-allantoin degradation. Functionally, catalyzes the catabolism of the allantoin degradation intermediate (S)-ureidoglycolate, generating urea and glyoxylate. Involved in the utilization of allantoin as nitrogen source. The chain is Ureidoglycolate lyase from Pseudomonas aeruginosa (strain LESB58).